We begin with the raw amino-acid sequence, 38 residues long: Photosystem II reaction center protein L (38 aa).

A helical transmembrane segment spans residues 17–37 (SLYWGLLLIFVLAVLFSSYIF).

Belongs to the PsbL family. In terms of assembly, PSII is composed of 1 copy each of membrane proteins PsbA, PsbB, PsbC, PsbD, PsbE, PsbF, PsbH, PsbI, PsbJ, PsbK, PsbL, PsbM, PsbT, PsbX, PsbY, PsbZ, Psb30/Ycf12, at least 3 peripheral proteins of the oxygen-evolving complex and a large number of cofactors. It forms dimeric complexes.

Its subcellular location is the plastid. It localises to the chloroplast thylakoid membrane. Its function is as follows. One of the components of the core complex of photosystem II (PSII). PSII is a light-driven water:plastoquinone oxidoreductase that uses light energy to abstract electrons from H(2)O, generating O(2) and a proton gradient subsequently used for ATP formation. It consists of a core antenna complex that captures photons, and an electron transfer chain that converts photonic excitation into a charge separation. This subunit is found at the monomer-monomer interface and is required for correct PSII assembly and/or dimerization. The polypeptide is Photosystem II reaction center protein L (Ostreococcus tauri).